The chain runs to 390 residues: Succinyl-diaminopimelate desuccinylase (390 aa).

His74 lines the Zn(2+) pocket. Residue Asp76 is part of the active site. A Zn(2+)-binding site is contributed by Asp107. Glu140 functions as the Proton acceptor in the catalytic mechanism. Positions 141, 169, and 363 each coordinate Zn(2+).

Belongs to the peptidase M20A family. DapE subfamily. As to quaternary structure, homodimer. It depends on Zn(2+) as a cofactor. The cofactor is Co(2+).

The catalysed reaction is N-succinyl-(2S,6S)-2,6-diaminopimelate + H2O = (2S,6S)-2,6-diaminopimelate + succinate. Its pathway is amino-acid biosynthesis; L-lysine biosynthesis via DAP pathway; LL-2,6-diaminopimelate from (S)-tetrahydrodipicolinate (succinylase route): step 3/3. Functionally, catalyzes the hydrolysis of N-succinyl-L,L-diaminopimelic acid (SDAP), forming succinate and LL-2,6-diaminopimelate (DAP), an intermediate involved in the bacterial biosynthesis of lysine and meso-diaminopimelic acid, an essential component of bacterial cell walls. This Bartonella quintana (strain Toulouse) (Rochalimaea quintana) protein is Succinyl-diaminopimelate desuccinylase.